The chain runs to 432 residues: Hexuronate transporter (432 aa).

The N-terminal stretch at 1–31 is a signal peptide; that stretch reads MRKIKGLRWYMIALVTLGTVLGYLTRNTVAA. The Periplasmic portion of the chain corresponds to 33–48; that stretch reads APTLMEELNISTQQYS. The chain crosses the membrane as a helical span at residues 49-69; the sequence is YIIAAYSAAYTVMQPVAGYVL. Topologically, residues 70–75 are cytoplasmic; the sequence is DVLGTK. The helical transmembrane segment at 76–96 threads the bilayer; sequence IGYAMFAVLWAVFCGATALAG. Topologically, residues 97-99 are periplasmic; that stretch reads SWG. The helical transmembrane segment at 100–120 threads the bilayer; that stretch reads GLAVARGAVGAAEAAMIPAGL. Topologically, residues 121-138 are cytoplasmic; it reads KASSEWFPAKERSIAVGY. Residues 139-159 traverse the membrane as a helical segment; it reads FNVGSSIGAMIAPPLVVWAIV. Topologically, residues 160 to 164 are periplasmic; sequence MHSWQ. The chain crosses the membrane as a helical span at residues 165–185; that stretch reads MAFIISGALSFIWAMAWLIFY. The Cytoplasmic segment spans residues 186–236; sequence KHPRDQKHLTDEERDYIINGQEAQHQVSTAKKMSVGQILRNRQFWGIALPR. A helical transmembrane segment spans residues 237–257; the sequence is FLAEPAWGTFNAWIPLFMFKV. Residues 258–264 lie on the Periplasmic side of the membrane; it reads YGFNLKE. Residues 265-285 traverse the membrane as a helical segment; that stretch reads IAMFAWMPMLFADLGCILGGY. The Cytoplasmic portion of the chain corresponds to 286 to 293; that stretch reads LPPLFQRW. Residues 294 to 314 form a helical membrane-spanning segment; that stretch reads FGVNLIVSRKMVVTLGAVLMI. Residues 315–317 lie on the Periplasmic side of the membrane; it reads GPG. Residues 318–338 form a helical membrane-spanning segment; sequence MIGLFTNPYVAIMLLCIGGFA. Residues 339-369 are Cytoplasmic-facing; the sequence is HQALSGALITLSSDVFGRNEVATANGLTGMS. The chain crosses the membrane as a helical span at residues 370 to 390; that stretch reads AWLASTLFALVVGALADTIGF. A topological domain (periplasmic) is located at residue Ser391. The helical transmembrane segment at 392 to 412 threads the bilayer; that stretch reads PLFAVLAVFDLLGALVIWTVL. Residues 413–432 are Cytoplasmic-facing; the sequence is QNKPAIEVAQETHNDPAPQH.

The protein belongs to the major facilitator superfamily. Phthalate permease family.

The protein resides in the cell inner membrane. The enzyme catalyses aldehydo-D-glucuronate(in) + H(+)(in) = aldehydo-D-glucuronate(out) + H(+)(out). It carries out the reaction aldehydo-D-galacturonate(out) + H(+)(out) = aldehydo-D-galacturonate(in) + H(+)(in). In terms of biological role, transport of aldohexuronates such as D-glucuronate and D-galacturonate. This chain is Hexuronate transporter (exuT), found in Escherichia coli O157:H7.